Consider the following 197-residue polypeptide: uncharacterized protein (197 aa).

Residues 150-172 (SLKLNTTLPMFALNLICLLRSIL) traverse the membrane as a helical segment.

The protein resides in the membrane. This is an uncharacterized protein from Saccharomyces cerevisiae (strain ATCC 204508 / S288c) (Baker's yeast).